A 182-amino-acid polypeptide reads, in one-letter code: Fimbrial subunit type 1 (182 aa).

The signal sequence occupies residues 1-23; the sequence is MKIKTLAIVVLSALSLSSAAALA. The cysteines at positions 44 and 84 are disulfide-linked.

Belongs to the fimbrial protein family.

It is found in the fimbrium. The protein is Fimbrial subunit type 1 of Klebsiella pneumoniae.